Reading from the N-terminus, the 158-residue chain is C-type lectin lectoxin-Enh5 (158 aa).

The N-terminal stretch at 1–23 (MGQFTVVSLGLLAVFLSLSGAKG) is a signal peptide. Disulfide bonds link cysteine 26-cysteine 37, cysteine 54-cysteine 154, and cysteine 129-cysteine 146. The C-type lectin domain occupies 33–155 (RNGVCNKLFP…CASLHPFICQ (123 aa)). Positions 119–121 (EPN) match the Mannose-binding motif. Glutamate 127, asparagine 142, and aspartate 143 together coordinate Ca(2+).

The protein belongs to the true venom lectin family. As to expression, expressed by the venom gland.

It localises to the secreted. Mannose-binding lectin which recognizes specific carbohydrate structures and agglutinates a variety of animal cells by binding to cell-surface glycoproteins and glycolipids. May be a calcium-dependent lectin. This chain is C-type lectin lectoxin-Enh5, found in Pseudoferania polylepis (Macleay's water snake).